Reading from the N-terminus, the 222-residue chain is N-(5'-phosphoribosyl)anthranilate isomerase (222 aa).

The protein belongs to the TrpF family.

It carries out the reaction N-(5-phospho-beta-D-ribosyl)anthranilate = 1-(2-carboxyphenylamino)-1-deoxy-D-ribulose 5-phosphate. It functions in the pathway amino-acid biosynthesis; L-tryptophan biosynthesis; L-tryptophan from chorismate: step 3/5. The polypeptide is N-(5'-phosphoribosyl)anthranilate isomerase (Prosthecochloris aestuarii (strain DSM 271 / SK 413)).